A 783-amino-acid chain; its full sequence is Endonuclease MutS2 (783 aa).

328–335 (GPNTGGKT) provides a ligand contact to ATP. The Smr domain maps to 708 to 783 (LDLRGKRYEE…GSGCTIATLG (76 aa)).

This sequence belongs to the DNA mismatch repair MutS family. MutS2 subfamily. In terms of assembly, homodimer. Binds to stalled ribosomes, contacting rRNA.

Endonuclease that is involved in the suppression of homologous recombination and thus may have a key role in the control of bacterial genetic diversity. Its function is as follows. Acts as a ribosome collision sensor, splitting the ribosome into its 2 subunits. Detects stalled/collided 70S ribosomes which it binds and splits by an ATP-hydrolysis driven conformational change. Acts upstream of the ribosome quality control system (RQC), a ribosome-associated complex that mediates the extraction of incompletely synthesized nascent chains from stalled ribosomes and their subsequent degradation. Probably generates substrates for RQC. This is Endonuclease MutS2 from Streptococcus thermophilus (strain CNRZ 1066).